The primary structure comprises 235 residues: Purine nucleoside phosphorylase DeoD-type (235 aa).

His4 contributes to the a purine D-ribonucleoside binding site. Phosphate contacts are provided by residues Gly20, Arg24, Arg43, and 87–90 (RVGT). Residues 180 to 182 (EME) and 204 to 205 (SD) each bind a purine D-ribonucleoside. Asp205 serves as the catalytic Proton donor.

It belongs to the PNP/UDP phosphorylase family. As to quaternary structure, homohexamer; trimer of homodimers.

It catalyses the reaction a purine D-ribonucleoside + phosphate = a purine nucleobase + alpha-D-ribose 1-phosphate. The enzyme catalyses a purine 2'-deoxy-D-ribonucleoside + phosphate = a purine nucleobase + 2-deoxy-alpha-D-ribose 1-phosphate. Functionally, catalyzes the reversible phosphorolytic breakdown of the N-glycosidic bond in the beta-(deoxy)ribonucleoside molecules, with the formation of the corresponding free purine bases and pentose-1-phosphate. The protein is Purine nucleoside phosphorylase DeoD-type of Oceanobacillus iheyensis (strain DSM 14371 / CIP 107618 / JCM 11309 / KCTC 3954 / HTE831).